We begin with the raw amino-acid sequence, 538 residues long: Coiled-coil domain-containing protein 8 (538 aa).

The segment at I58–R128 is disordered. The segment covering Q119–R128 has biased composition (basic residues). Phosphoserine is present on residues S142, S146, and S261. The disordered stretch occupies residues W213–K473. The segment covering D301–E313 has biased composition (basic and acidic residues). Over residues A321 to A332 the composition is skewed to low complexity. Residues A349 to N366 are a coiled coil. Composition is skewed to basic and acidic residues over residues D357–A373, D381–R392, and D405–A419. Low complexity-rich tracts occupy residues Q428–A438 and A458–A469. Positions P500–P506 match the PxLPxI/L motif; mediates interaction with ANKRA2 motif. Residues E514–E535 adopt a coiled-coil conformation.

In terms of assembly, component of the 3M complex, composed of core components CUL7, CCDC8 and OBSL1. Interacts (via PxLPxI/L motif) with ANKRA2 (via ankyrin repeats); may link the 3M complex to histone deacetylases including HDAC4 and HDAC5. Widely expressed with low levels in spleen, skeletal muscle, small intestine, kidney and liver.

Its subcellular location is the cytoplasm. It localises to the cytoskeleton. It is found in the microtubule organizing center. The protein localises to the centrosome. Core component of the 3M complex, a complex required to regulate microtubule dynamics and genome integrity. It is unclear how the 3M complex regulates microtubules, it could act by controlling the level of a microtubule stabilizer. Required for localization of CUL7 to the centrosome. The sequence is that of Coiled-coil domain-containing protein 8 (CCDC8) from Homo sapiens (Human).